The sequence spans 149 residues: Alpha-amylase/trypsin inhibitor CMb (149 aa).

Residues 1–24 (MASKSSCDLLLAAVLVSIFAAVAA) form the signal peptide. A glycan (N-linked (GlcNAc...) asparagine) is linked at asparagine 124.

This sequence belongs to the protease inhibitor I6 (cereal trypsin/alpha-amylase inhibitor) family. In terms of assembly, heterotetramer of one CMa, one CMb and two CMd chains. Five disulfide bonds, which are essential for the inhibitor activity, are probably present. In terms of processing, exists both in a glycosylated and in an unglycosylated form. The glycosylated form is a potent allergen. Endosperm.

Its subcellular location is the secreted. In terms of biological role, part of a complex with inhibitory activity, but CMb is inactive as a separate subunit. This Hordeum vulgare (Barley) protein is Alpha-amylase/trypsin inhibitor CMb (IAT2).